Reading from the N-terminus, the 768-residue chain is MSNLSKGTGSRKDTKMRIRAFPMTMDEKYVNSIWDLLKNAIQEIQRKNNSGLSFEELYRNAYTMVLHKHGEKLYTGLREVVTEHLINKVREDVLNSLNNNFLQTLNQAWNDHQTAMVMIRDILMYMDRVYVQQNNVENVYNLGLIIFRDQVVRYGCIRDHLRQTLLDMIARERKGEVVDRGAIRNACQMLMILGLEGRSVYEEDFEAPFLEMSAEFFQMESQKFLAENSASVYIKKVEARINEEIERVMHCLDKSTEEPIVKVVERELISKHMKTIVEMENSGLVHMLKNGKTEDLGCMYKLFSRVPNGLKTMCECMSSYLREQGKALVSEEGEGKNPVDYIQGLLDLKSRFDRFLLESFNNDRLFKQTIAGDFEYFLNLNSRSPEYLSLFIDDKLKKGVKGLTEQEVETILDKAMVLFRFMQEKDVFERYYKQHLARRLLTNKSVSDDSEKNMISKLKTECGCQFTSKLEGMFRDMSISNTTMDEFRQHLQATGVSLGGVDLTVRVLTTGYWPTQSATPKCNIPPAPRHAFEIFRRFYLAKHSGRQLTLQHHMGSADLNATFYGPVKKEDGSEVGVGGAQVTGSNTRKHILQVSTFQMTILMLFNNREKYTFEEIQQETDIPERELVRALQSLACGKPTQRVLTKEPKSKEIENGHIFTVNDQFTSKLHRVKIQTVAAKQGESDPERKETRQKVDDDRKHEIEAAIVRIMKSRKKMQHNVLVAEVTQQLKARFLPSPVVIKKRIEGLIEREYLARTPEDRKVYTYVA.

N-acetylserine is present on serine 2. The tract at residues 2-41 (SNLSKGTGSRKDTKMRIRAFPMTMDEKYVNSIWDLLKNAI) is interaction with KLHL18. At serine 585 the chain carries Phosphoserine. The segment at 677-698 (VAAKQGESDPERKETRQKVDDD) is disordered. A compositionally biased stretch (basic and acidic residues) spans 682-698 (GESDPERKETRQKVDDD). The 63-residue stretch at 698–760 (DRKHEIEAAI…REYLARTPED (63 aa)) folds into the Cullin neddylation domain. Lysine 712 is covalently cross-linked (Glycyl lysine isopeptide (Lys-Gly) (interchain with G-Cter in NEDD8)).

It belongs to the cullin family. In terms of assembly, forms neddylation-dependent homodimers. Component of multiple BCR (BTB-CUL3-RBX1) E3 ubiquitin-protein ligase complexes formed of CUL3, RBX1 and a variable BTB domain-containing protein acting as both, adapter to cullin and substrate recognition subunit. The BCR complex may be active as a heterodimeric complex, in which NEDD8, covalently attached to one CUL3 molecule, binds to the C-terminus of a second CUL3 molecule. Interacts with RBX1, RNF7, CYCE and TIP120A/CAND1. Part of the BCR(SPOP) containing SPOP, and of BCR containing homodimeric SPOPL or the heterodimer formed by SPOP and SPOPL. Part of the probable BCR(KLHL9-KLHL13) complex with BTB domain proteins KLHL9 and KLHL13. Part of the BCR(KLHL41) complex containing KLHL41. Component of the BCR(KLHL12) E3 ubiquitin ligase complex, at least composed of CUL3 and KLHL12 and RBX1. Component of the BCR(KLHL3) E3 ubiquitin ligase complex, at least composed of CUL3 and KLHL3 and RBX1. Part of the BCR(ENC1) complex containing ENC1. Part of a complex consisting of BMI1/PCGF4, CUL3 and SPOP. Part of a complex consisting of BRMS1, CUL3 and SPOP. Component of the BCR(KLHL21) E3 ubiquitin ligase complex, at least composed of CUL3, KLHL21 and RBX1. Component of the BCR(KLHL22) E3 ubiquitin ligase complex, at least composed of CUL3, KLHL22 and RBX1. Component of the BCR(KLHL25) E3 ubiquitin ligase complex, at least composed of CUL3, KLHL25 and RBX1. Part of a complex consisting of MACROH2A1, CUL3 and SPOP. Component of the BCR(KLHL42) E3 ubiquitin ligase complex, at least composed of CUL3 and KLHL42. Interacts with KLHL42 (via the BTB domain). Interacts with KATNA1; the interaction is enhanced by KLHL42. Component of the BCR(KBTBD8) E3 ubiquitin ligase complex, at least composed of CUL3, KBTBD8 and RBX1. Interacts with KCTD5, KLHL9, KLHL11, KLHL13, GAN, ZBTB16, KLHL3, KLHL15, KLHL20, KLHL36, GMCL2, BTBD1. Part of a complex that contains CUL3, RBX1 and GAN. Interacts (via BTB domain) with KLHL17; the interaction regulates surface GRIK2 expression. Interacts with KCTD7. Part of the BCR(GAN) complex containing GAN. Part of the BCR(KEAP1) complex containing KEAP1. Interacts with KLHL10. Interacts with KAT5 and ATF2. Interacts with KCTD17 in the BCR(KCTD17) E3 ubiquitin ligase complex, at least composed of CUL3, KCTD17 and RBX1. Interacts (when neddylated) with ARIH1; leading to activate the E3 ligase activity of ARIH1. Interacts with COPS9 isoform 2. Interacts with PPP2R5B; this interaction is indirect and mediated through KLHL15-binding and leads to PPP2R5B proteasomal degradation. Interacts with RBBP8/CtIP; this interaction is indirect and mediated through KLHL15-binding and leads to RBBP8 proteasomal degradation. Interacts with KLHL24 in the BCR(KLHL24) E3 ubiquitin ligase complex, composed of CUL3, RBX1 and KLHL24. Interacts with RHOBTB2. Interacts with AURKA and KLHL18 (via BTB domain). Interacts (unneddylated form) with DCUN1D1, DCUN1D2, DCUN1D3, DCUN1D4 and DCUN1D5; these interactions promote the cullin neddylation. Component of a BCR3 (BTB-CUL3-RBX1) E3 ubiquitin ligase complex, also named Cul3-RING ubiquitin ligase complex CUL3(KBTBD6/7), composed of CUL3, RBX1, KBTBD6 and KBTBD7. Component of the BCR(KBTBD2) E3 ubiquitin ligase complex, at least composed of CUL3, KBTBD2 and RBX1. Interacts with KBTBD2 (via the BTB domain). Component of the BCR(KBTBD4) E3 ubiquitin ligase complex, at least composed of CUL3, KBTBD4 and RBX1. Component of the BCR(ARMC5) E3 ubiquitin ligase complex, composed of CUL3, ARMC5 and RBX1. Post-translationally, neddylated. Attachment of NEDD8 is required for the E3 ubiquitin-protein ligase activity of the BCR complex. Deneddylated via its interaction with the COP9 signalosome (CSN) complex. As to expression, brain, spermatozoa, and testis (at protein level). Widely expressed.

It localises to the nucleus. The protein resides in the golgi apparatus. The protein localises to the cell projection. It is found in the cilium. Its subcellular location is the flagellum. It localises to the cytoplasm. The protein resides in the cytoskeleton. The protein localises to the spindle. It is found in the microtubule organizing center. Its subcellular location is the centrosome. It localises to the spindle pole. It functions in the pathway protein modification; protein ubiquitination. Functionally, core component of multiple cullin-RING-based BCR (BTB-CUL3-RBX1) E3 ubiquitin-protein ligase complexes which mediate the ubiquitination and subsequent proteasomal degradation of target proteins. BCR complexes and ARIH1 collaborate in tandem to mediate ubiquitination of target proteins. As a scaffold protein may contribute to catalysis through positioning of the substrate and the ubiquitin-conjugating enzyme. The E3 ubiquitin-protein ligase activity of the complex is dependent on the neddylation of the cullin subunit and is inhibited by the association of the deneddylated cullin subunit with TIP120A/CAND1. The functional specificity of the BCR complex depends on the BTB domain-containing protein as the substrate recognition component. BCR(KLHL42) is involved in ubiquitination of KATNA1. BCR(SPOP) is involved in ubiquitination of BMI1/PCGF4, BRMS1, MACROH2A1 and DAXX, GLI2 and GLI3. Can also form a cullin-RING-based BCR (BTB-CUL3-RBX1) E3 ubiquitin-protein ligase complex containing homodimeric SPOPL or the heterodimer formed by SPOP and SPOPL; these complexes have lower ubiquitin ligase activity. BCR(KLHL9-KLHL13) controls the dynamic behavior of AURKB on mitotic chromosomes and thereby coordinates faithful mitotic progression and completion of cytokinesis. BCR(KLHL12) is involved in ER-Golgi transport by regulating the size of COPII coats, thereby playing a key role in collagen export, which is required for embryonic stem (ES) cells division: BCR(KLHL12) acts by mediating monoubiquitination of SEC31 (SEC31A or SEC31B). BCR(KLHL3) acts as a regulator of ion transport in the distal nephron; by mediating ubiquitination of WNK4. The BCR(KLHL20) E3 ubiquitin ligase complex is involved in interferon response and anterograde Golgi to endosome transport: it mediates both ubiquitination leading to degradation and 'Lys-33'-linked ubiquitination. The BCR(KLHL21) E3 ubiquitin ligase complex regulates localization of the chromosomal passenger complex (CPC) from chromosomes to the spindle midzone in anaphase and mediates the ubiquitination of AURKB. The BCR(KLHL22) ubiquitin ligase complex mediates monoubiquitination of PLK1, leading to PLK1 dissociation from phosphoreceptor proteins and subsequent removal from kinetochores, allowing silencing of the spindle assembly checkpoint (SAC) and chromosome segregation. The BCR(KLHL22) ubiquitin ligase complex is also responsible for the amino acid-stimulated 'Lys-48' polyubiquitination and proteasomal degradation of DEPDC5. Through the degradation of DEPDC5, releases the GATOR1 complex-mediated inhibition of the TORC1 pathway. The BCR(KLHL25) ubiquitin ligase complex is involved in translational homeostasis by mediating ubiquitination and subsequent degradation of hypophosphorylated EIF4EBP1 (4E-BP1). The BCR(KLHL25) ubiquitin ligase complex is also involved in lipid synthesis by mediating ubiquitination and degradation of ACLY. The BCR(KBTBD8) complex acts by mediating monoubiquitination of NOLC1 and TCOF1, leading to remodel the translational program of differentiating cells in favor of neural crest specification. Involved in ubiquitination of cyclin E and of cyclin D1 (in vitro) thus involved in regulation of G1/S transition. Involved in the ubiquitination of KEAP1, ENC1 and KLHL41. In concert with ATF2 and RBX1, promotes degradation of KAT5 thereby attenuating its ability to acetylate and activate ATM. The BCR(KCTD17) E3 ubiquitin ligase complex mediates ubiquitination and degradation of TCHP, a down-regulator of cilium assembly, thereby inducing ciliogenesis. The BCR(KLHL24) E3 ubiquitin ligase complex mediates ubiquitination of KRT14, controls KRT14 levels during keratinocytes differentiation, and is essential for skin integrity. The BCR(KLHL18) E3 ubiquitin ligase complex mediates the ubiquitination of AURKA leading to its activation at the centrosome which is required for initiating mitotic entry. The BCR(KEAP1) E3 ubiquitin ligase complex acts as a key sensor of oxidative and electrophilic stress by mediating ubiquitination and degradation of NFE2L2/NRF2, a transcription factor regulating expression of many cytoprotective genes. As part of the CUL3(KBTBD6/7) E3 ubiquitin ligase complex functions mediates 'Lys-48' ubiquitination and proteasomal degradation of TIAM1. By controlling the ubiquitination of that RAC1 guanine exchange factors (GEF), regulates RAC1 signal transduction and downstream biological processes including the organization of the cytoskeleton, cell migration and cell proliferation. The BCR(KBTBD4) E3 ubiquitin ligase complex targets CoREST corepressor complex components RCOR1, KDM1A/LSD1 and HDAC2 for proteasomal degradation with RCOR1 likely to be the primary target while degradation of KDM1A and HDAC2 is likely due to their association with RCOR1. It also targets RCOR3, MIER2 and MIER3 for proteasomal degradation as well as associated proteins ZNF217 and RREB1 with degradation being dependent on the presence of an ELM2 domain in the target proteins. The BCR(ARMC5) complex mediates premature transcription termination of transcripts that are unfavorably configured for transcriptional elongation by mediating ubiquitination of Pol II subunit POLR2A. Required for 'Lys-63'-linked ubiquitination of large ribosomal subunit protein MRPL12. This is Cullin-3 from Homo sapiens (Human).